A 1202-amino-acid chain; its full sequence is Protein HASTY 1 (1202 aa).

An N-acetylmethionine modification is found at M1.

This sequence belongs to the exportin family. Interacts with RAN1. Expressed in roots, leaves and floral buds.

The protein resides in the nucleus. Nucleocytoplasmic transporter involved in the nuclear export of microRNAs (miRNAs). Required for several miRNAs accumulation. Specifically required for miR156 accumulation which targets SPL3, SPL4 and SPL5 transcription factors. Involved in plant development through its role in miRNAs processing. Required for vegetative phase change and vegetative to reproductive phase transition. Functionally dependent on RAN1 binding. Does not seem to be involved in small interfering RNAs (siRNAs) processing. The polypeptide is Protein HASTY 1 (HST1) (Arabidopsis thaliana (Mouse-ear cress)).